Reading from the N-terminus, the 121-residue chain is Basic phospholipase A2 VRV-PL-V (121 aa).

7 cysteine pairs are disulfide-bonded: C26–C115, C28–C44, C43–C95, C49–C121, C50–C88, C57–C81, and C75–C86. Positions 27, 29, and 31 each coordinate Ca(2+). The active site involves H47. D48 contacts Ca(2+). D89 is an active-site residue.

It belongs to the phospholipase A2 family. Group II subfamily. D49 sub-subfamily. As to quaternary structure, monomer. Requires Ca(2+) as cofactor. In terms of tissue distribution, expressed by the venom gland.

It is found in the secreted. The catalysed reaction is a 1,2-diacyl-sn-glycero-3-phosphocholine + H2O = a 1-acyl-sn-glycero-3-phosphocholine + a fatty acid + H(+). In terms of biological role, snake venom phospholipase A2 (PLA2) that has a low enzymatic activity. PLA2 catalyzes the calcium-dependent hydrolysis of the 2-acyl groups in 3-sn-phosphoglycerides. In Daboia russelii (Russel's viper), this protein is Basic phospholipase A2 VRV-PL-V.